A 68-amino-acid chain; its full sequence is uncharacterized protein (68 aa).

The helical transmembrane segment at 24 to 44 threads the bilayer; that stretch reads AHICKCIAMFFVVAGVVLMFF.

The protein resides in the endoplasmic reticulum. The protein localises to the membrane. This is an uncharacterized protein from Saccharomyces cerevisiae (strain ATCC 204508 / S288c) (Baker's yeast).